Consider the following 654-residue polypeptide: MSQVLFQQLVPLLVKCKDCEERRGSVRVSIELQSLSNPVHRKDLVIRLTDDTDPFFLYNLVISEEDFQSLKLQQGLLVDFLAFPQKFIDLLQQCMQEHAKETPRFLLQLLSSATLLENSPVLLNVVETNPFKHLIHLSLKLLPGNDVEIKKFLAGCLKCSKEEKLSLTRSLDDVTRQLHITQETLSEKMQELDKLRSEWASHTASLTNKHSQELTAEKEKALQTQVQCQQQHEQQKKELETLHQRNIHQLQSRLSELEAANKELTERKYKGDSTVRELKAKLAGVEEELQRAKQEVLSLRRENCTLDTECHEKEKHINQLQTKVAVLEQEIKDKDQLVLRTKEAFDTIQEQKVALEENGEKNQIQLGKLEATIKSLSAELLKANEIIKKLQGDLKTLMGKLKLKNTVTIQQEKLLAEKEEMLQKERKESQDAGQFLRAKEQEVCRLQEQLETTVQKLEESKQLLKNNEKLITWLNKELNENQLVRKQDTLGTSATPHSTSNSTIRSGLSPNLNVVDRLNYPSCGIGYPVSSALTFQNAFPHVVAAKNTSHPISGPKVHFNLQLTKPSASIDGQPGAAVNRPCSNDKENGETLGLESKYLKRREASIPLRGLSQNLLSDSDHQKDGMLGAFQLSSKPTVLPSSSSAYFPGQLPSS.

The 53-residue stretch at 39–91 (VHRKDLVIRLTDDTDPFFLYNLVISEEDFQSLKLQQGLLVDFLAFPQKFIDLL) folds into the PISA domain. Positions 175 to 471 (TRQLHITQET…QLLKNNEKLI (297 aa)) form a coiled coil. S509 bears the Phosphoserine mark. Residues 568 to 589 (ASIDGQPGAAVNRPCSNDKENG) form a disordered region. Position 612 is a phosphoserine (S612). The span at 634–644 (SKPTVLPSSSS) shows a compositional bias: low complexity. The tract at residues 634 to 654 (SKPTVLPSSSSAYFPGQLPSS) is disordered. Position 654 is a phosphoserine (S654).

As to quaternary structure, nine homodimers form a cartwheel structure with an internal diameter of 23 nm and radial spokes connecting to the microtubule triplets. Forms a complex with CPAP and STIL. Interacts with FBXW5. Interacts with NUP62 and TUBG1 at the centrosome. Interacts with CENATAC; the interaction increases with CENATAC acetylation. Interacts with FZR1; the interaction is regulated by CENATAC and leads to SASS6 proteasomal degradation. Post-translationally, ubiquitinated by the SCF(FBXW5) E3 ubiquitin-protein ligase complex during S phase, leading to its degradation and preventing centriole reduplication. Ubiquitinated by the anaphase promoting complex/cyclosome (APC/C) E3 ubiquitin-protein ligase complex, leading to its degradation and preventing centriole reduplication.

It localises to the cytoplasm. Its subcellular location is the cytoskeleton. The protein localises to the microtubule organizing center. The protein resides in the centrosome. It is found in the centriole. Central scaffolding component of the centrioles ensuring their 9-fold symmetry. Required for centrosome biogenesis and duplication. Required both for mother-centriole-dependent centriole duplication and deuterosome-dependent centriole amplification in multiciliated cells. Not required for centriole formation in embryonic stem cells but necessary to maintain centriole architecture. Required for the recruitment of STIL to the procentriole and for STIL-mediated centriole amplification. This chain is Spindle assembly abnormal protein 6 homolog, found in Mus musculus (Mouse).